A 183-amino-acid chain; its full sequence is Inner membrane-spanning protein YciB (183 aa).

Transmembrane regions (helical) follow at residues 19 to 39 (LYGV…QLIV), 53 to 73 (IMGI…DLNF), 76 to 96 (WKVT…QFVF), 121 to 141 (LGWA…SYYF), and 151 to 171 (TFGF…YLYP).

Belongs to the YciB family.

It localises to the cell inner membrane. Plays a role in cell envelope biogenesis, maintenance of cell envelope integrity and membrane homeostasis. The chain is Inner membrane-spanning protein YciB from Actinobacillus pleuropneumoniae serotype 5b (strain L20).